We begin with the raw amino-acid sequence, 334 residues long: WD repeat-containing protein 54 (334 aa).

3 WD repeats span residues 116 to 155, 162 to 206, and 250 to 289; these read SSVQAMFARGIAASVHFICVGTCSGRVLVFDIPAKGPNIV, GHQT…TLLT, and AHARTISALDLAPEVGKLLSAAEDTFVHIWKLNRNPESGS.

Homodimer and homotrimer; forms tight forms of dimers and trimers. Interacts with IZUMO1 and IZUMO1R/JUNO. In terms of processing, cross-linked to tightly form both dimers and trimers by TGM2. Cross-linking enhances the activation of EGF receptor-mediated signaling pathway. Cross-linking is inhibited by EGF. Ubiquitinated. EGF increases ubiquitination.

It localises to the vesicle. Its subcellular location is the cytoplasm. It is found in the cell membrane. Its function is as follows. Plays a role in the adhesion and fusion of the sperm-oocyte membrane through its interactions with IZUMO1 and IZUMO1R/JUNO. When cross-linked to form dimers and trimers, it has a regulatory effect on ERK signaling pathway activity in response to EGF stimulation. Colocalizes with the EGF receptor in WDR54-specific vesicle where it sustains the internalization and controls the degradation of the EGF receptor after EGF stimulation. The chain is WD repeat-containing protein 54 from Mus musculus (Mouse).